Here is a 292-residue protein sequence, read N- to C-terminus: 4-diphosphocytidyl-2-C-methyl-D-erythritol kinase (292 aa).

The active site involves Lys20. 103–113 (PMGGGIGGGSS) serves as a coordination point for ATP. Asp145 is a catalytic residue.

It belongs to the GHMP kinase family. IspE subfamily.

The catalysed reaction is 4-CDP-2-C-methyl-D-erythritol + ATP = 4-CDP-2-C-methyl-D-erythritol 2-phosphate + ADP + H(+). It functions in the pathway isoprenoid biosynthesis; isopentenyl diphosphate biosynthesis via DXP pathway; isopentenyl diphosphate from 1-deoxy-D-xylulose 5-phosphate: step 3/6. Functionally, catalyzes the phosphorylation of the position 2 hydroxy group of 4-diphosphocytidyl-2C-methyl-D-erythritol. The polypeptide is 4-diphosphocytidyl-2-C-methyl-D-erythritol kinase (Cupriavidus taiwanensis (strain DSM 17343 / BCRC 17206 / CCUG 44338 / CIP 107171 / LMG 19424 / R1) (Ralstonia taiwanensis (strain LMG 19424))).